The chain runs to 441 residues: MFSDERTVGVAVLGLGNVGSEVVRIIEGSADDLAARIGAPLMLRGIGVRRVAVDRGVPVDLLTDNIEELVSRADVDIVVEVMGPVELSRKAILSALEHGKSVVTANKALLAASTGELAQAAESAHVDLYFEAAVAGAIPVIRPLTQSLAGDTVLRVAGIVNGTTNYILSAMDSTGADYDSALAGARALGYAEADPTADVEGHDAAAKAAILASIAFHTRVTADDVYREGITKITPADFVSARALGCTIKLLFICERITAADGQQRVSARVYPALVPMSHPLATVSGAFNAVVVEAEAAGRLMFYGQGAGGAPTASAVTGDLVMAARNRVLGSRGPKESKYAQLPMETIGFISTRYYVSMNVADKPGVLSGVAAEFAKREVSIAEVRQEGVVDDGGRRVGARIVVVTHGATDAALSETVDALADLDVVQGVTSVLRLEGISL.

NADP(+) is bound by residues Asn-17 and Val-18. NAD(+) is bound by residues Val-18 and Gly-47. Val-18 is an NADPH binding site. Positions 49, 50, and 107 each coordinate NADP(+). Residue Arg-49 coordinates NADPH. Lys-107 is a binding site for NADPH. Na(+) is bound by residues Glu-131, Val-134, Gly-136, and Ile-138. Positions 189 and 192 each coordinate NADP(+). L-homoserine-binding residues include Glu-192 and Asp-203. Lys-207 acts as the Proton donor in catalysis. Gly-309 provides a ligand contact to NADP(+). Gly-309 serves as a coordination point for NAD(+). Gly-309 lines the NADPH pocket. The 80-residue stretch at 356 to 435 folds into the ACT domain; it reads YVSMNVADKP…VVQGVTSVLR (80 aa).

The protein belongs to the homoserine dehydrogenase family. It depends on a metal cation as a cofactor.

The enzyme catalyses L-homoserine + NADP(+) = L-aspartate 4-semialdehyde + NADPH + H(+). It carries out the reaction L-homoserine + NAD(+) = L-aspartate 4-semialdehyde + NADH + H(+). Its pathway is amino-acid biosynthesis; L-methionine biosynthesis via de novo pathway; L-homoserine from L-aspartate: step 3/3. It participates in amino-acid biosynthesis; L-threonine biosynthesis; L-threonine from L-aspartate: step 3/5. Its function is as follows. Catalyzes the conversion of L-aspartate-beta-semialdehyde (L-Asa) to L-homoserine (L-Hse), the third step in the biosynthesis of threonine and methionine from aspartate. In Mycobacterium leprae (strain TN), this protein is Homoserine dehydrogenase (hom).